The primary structure comprises 453 residues: MLIAFCTCEIFHLTMTDQVKVRFFTNEEDDLKVSENPIFVPVSLKRYGLSEIVNHLLNDGETKKAIPFDFLVDGVLLRTSLQDYLTKQGLSTETVIDLQYTRAVLPPSFLASFTNEDWISSIDTINPGHGAVLASNMKLQESKILSGSYDGVVRTYNMSGEVESQYIGHSGPVKSVRWISPTRIVSAGNDHSLRLWKTKLAGVEEGAEDGKTTAILEGHKGPVVDLAVDYKSNKIISAGNDSVVGVWSTNASDMSAVTVSEPTGSTMSKKRKKLALQDSTIKRRAPLAMMDGHGQPVTGVCFDVNDKSVIYSASQDHTIKTWDLVTSRCVDTRSTGFSLLSILQLPNLHLVASGSSARHINLHDPRASSSTEQVSRKLVGHTNFVVSMAACPDKDHMFASASHDGTVKVWDVRADKAMYTLGKGGKVFGVSWDPIGIVSGGEDKKIDIYREAN.

The segment at 19-102 (VKVRFFTNEE…ETVIDLQYTR (84 aa)) is ubiquitin-like (UBL) domain. The segment at 112–453 (SFTNEDWISS…KKIDIYREAN (342 aa)) is sufficient for interaction with ERB1 and association with 66S pre-ribosomes. 7 WD repeats span residues 128–166 (GHGAVLASNMKLQESKILSGSYDGVVRTYNMSGEVESQY), 168–206 (GHSGPVKSVRWISPTRIVSAGNDHSLRLWKTKLAGVEEG), 218–257 (GHKGPVVDLAVDYKSNKIISAGNDSVVGVWSTNASDMSAV), 292–332 (GHGQ…CVDT), 334–373 (STGFSLLSILQLPNLHLVASGSSARHINLHDPRASSSTEQ), 380–420 (GHTN…AMYT), and 422–453 (GKGGKVFGVSWDPIGIVSGGEDKKIDIYREAN).

This sequence belongs to the WD repeat WDR12/YTM1 family. As to quaternary structure, component of the NOP7 complex, composed of ERB1, NOP7 and YTM1. The complex is held together by ERB1, which interacts with NOP7 via its N-terminal domain and with YTM1 via a high-affinity interaction between the seven-bladed beta-propeller domains of the 2 proteins. The NOP7 complex associates with the 66S pre-ribosome. Interacts (via UBL domain) with MDN1 (via VWFA/MIDAS domain).

Its subcellular location is the nucleus. The protein resides in the nucleolus. The protein localises to the nucleoplasm. In terms of biological role, component of the NOP7 complex, which is required for maturation of the 25S and 5.8S ribosomal RNAs and formation of the 60S ribosome. The chain is Ribosome biogenesis protein YTM1 from Meyerozyma guilliermondii (strain ATCC 6260 / CBS 566 / DSM 6381 / JCM 1539 / NBRC 10279 / NRRL Y-324) (Yeast).